The sequence spans 520 residues: Transactivator/viroplasmin protein (520 aa).

Disordered stretches follow at residues 32 to 51 and 487 to 520; these read GSSQQGELSLHRETPEKEEA and QDASTDSGPKDGPPPTRSIVEKEDVPTTSSKQVD. Basic and acidic residues predominate over residues 40 to 51; sequence SLHRETPEKEEA.

This sequence belongs to the caulimoviridae viroplasmin family.

The protein localises to the host cytoplasm. Functionally, enhances the ribosomal termination-reinitiation event leading to the translation of major open reading frames on the polycistronic viral RNAs. This chain is Transactivator/viroplasmin protein, found in Arabidopsis thaliana (Mouse-ear cress).